Here is a 119-residue protein sequence, read N- to C-terminus: Large ribosomal subunit protein bL20 (119 aa).

It belongs to the bacterial ribosomal protein bL20 family.

Binds directly to 23S ribosomal RNA and is necessary for the in vitro assembly process of the 50S ribosomal subunit. It is not involved in the protein synthesizing functions of that subunit. The polypeptide is Large ribosomal subunit protein bL20 (Streptococcus uberis (strain ATCC BAA-854 / 0140J)).